A 261-amino-acid polypeptide reads, in one-letter code: Gap junction beta-6 protein (261 aa).

At Met1–Lys22 the chain is on the cytoplasmic side. The helical transmembrane segment at Val23 to Gly45 threads the bilayer. Topologically, residues Asp46–Arg75 are extracellular. A helical membrane pass occupies residues Leu76 to Tyr98. Residues Arg99–Ser131 are Cytoplasmic-facing. The helical transmembrane segment at Leu132 to Phe154 threads the bilayer. The Extracellular portion of the chain corresponds to Tyr155–Thr192. The chain crosses the membrane as a helical span at residues Val193–Leu215. The Cytoplasmic portion of the chain corresponds to Lys216–Ser261.

This sequence belongs to the connexin family. Beta-type (group I) subfamily. In terms of assembly, a connexon is composed of a hexamer of connexins. Interacts with CNST. As to expression, highly expressed in adult brain and skin. Less in uterus, lung and eye. Very low in testis and sciatic nerve. No expression before birth.

It is found in the cell membrane. It localises to the cell junction. The protein localises to the gap junction. Its function is as follows. One gap junction consists of a cluster of closely packed pairs of transmembrane channels, the connexons, through which materials of low MW diffuse from one cell to a neighboring cell. The polypeptide is Gap junction beta-6 protein (Gjb6) (Mus musculus (Mouse)).